We begin with the raw amino-acid sequence, 196 residues long: Guanylate kinase (196 aa).

The region spanning 8-191 is the Guanylate kinase-like domain; it reads GRLIVLTGPT…AAADLWSVIA (184 aa). 15–22 serves as a coordination point for ATP; the sequence is GPTAVGKG.

It belongs to the guanylate kinase family.

It localises to the cytoplasm. It carries out the reaction GMP + ATP = GDP + ADP. In terms of biological role, essential for recycling GMP and indirectly, cGMP. This is Guanylate kinase from Bifidobacterium longum (strain NCC 2705).